Consider the following 84-residue polypeptide: Large ribosomal subunit protein bL27 (84 aa).

The segment at M1–L21 is disordered.

It belongs to the bacterial ribosomal protein bL27 family.

This is Large ribosomal subunit protein bL27 from Brachyspira hyodysenteriae (strain ATCC 49526 / WA1).